The primary structure comprises 372 residues: Chaperone protein DnaJ (372 aa).

Positions 5-70 (SYYDILGVSK…KKRQAYDQFG (66 aa)) constitute a J domain. The CR-type zinc finger occupies 140–218 (GREYKIEIPR…CGGQGLQEKR (79 aa)). Residues Cys-153, Cys-156, Cys-170, Cys-173, Cys-192, Cys-195, Cys-206, and Cys-209 each contribute to the Zn(2+) site. CXXCXGXG motif repeat units lie at residues 153–160 (CVDCNGSG), 170–177 (CPDCGGSG), 192–199 (CPTCRGKG), and 206–213 (CRSCGGQG).

Belongs to the DnaJ family. As to quaternary structure, homodimer. Requires Zn(2+) as cofactor.

The protein localises to the cytoplasm. Participates actively in the response to hyperosmotic and heat shock by preventing the aggregation of stress-denatured proteins and by disaggregating proteins, also in an autonomous, DnaK-independent fashion. Unfolded proteins bind initially to DnaJ; upon interaction with the DnaJ-bound protein, DnaK hydrolyzes its bound ATP, resulting in the formation of a stable complex. GrpE releases ADP from DnaK; ATP binding to DnaK triggers the release of the substrate protein, thus completing the reaction cycle. Several rounds of ATP-dependent interactions between DnaJ, DnaK and GrpE are required for fully efficient folding. Also involved, together with DnaK and GrpE, in the DNA replication of plasmids through activation of initiation proteins. This chain is Chaperone protein DnaJ, found in Leptospira interrogans serogroup Icterohaemorrhagiae serovar copenhageni (strain Fiocruz L1-130).